The chain runs to 400 residues: Formate-dependent phosphoribosylglycinamide formyltransferase (400 aa).

Residues 22-23 (EL) and E82 contribute to the N(1)-(5-phospho-beta-D-ribosyl)glycinamide site. Residues R115, K157, 162–167 (SSGKGQ), 197–200 (EGFI), and E205 each bind ATP. The ATP-grasp domain maps to 120–315 (RLAAETLGLP…EFELHARAIL (196 aa)). Residues E274 and E286 each contribute to the Mg(2+) site. N(1)-(5-phospho-beta-D-ribosyl)glycinamide-binding positions include D293, K362, and 369–370 (RR).

The protein belongs to the PurK/PurT family. In terms of assembly, homodimer.

It catalyses the reaction N(1)-(5-phospho-beta-D-ribosyl)glycinamide + formate + ATP = N(2)-formyl-N(1)-(5-phospho-beta-D-ribosyl)glycinamide + ADP + phosphate + H(+). It participates in purine metabolism; IMP biosynthesis via de novo pathway; N(2)-formyl-N(1)-(5-phospho-D-ribosyl)glycinamide from N(1)-(5-phospho-D-ribosyl)glycinamide (formate route): step 1/1. Its function is as follows. Involved in the de novo purine biosynthesis. Catalyzes the transfer of formate to 5-phospho-ribosyl-glycinamide (GAR), producing 5-phospho-ribosyl-N-formylglycinamide (FGAR). Formate is provided by PurU via hydrolysis of 10-formyl-tetrahydrofolate. This chain is Formate-dependent phosphoribosylglycinamide formyltransferase, found in Cupriavidus metallidurans (strain ATCC 43123 / DSM 2839 / NBRC 102507 / CH34) (Ralstonia metallidurans).